We begin with the raw amino-acid sequence, 327 residues long: Asnovolin J 5',6'-dehydrogenase nvfM (327 aa).

The helical transmembrane segment at V9 to L29 threads the bilayer. Residues G13–G19 and K47 contribute to the NADP(+) site. The active-site Proton acceptor is K130.

The protein belongs to the NmrA-type oxidoreductase family.

The protein resides in the membrane. It carries out the reaction asnovolin K + AH2 = asnovolin A + A. It catalyses the reaction chermesin D methyl ester + AH2 = asnovolin J + A. The protein operates within secondary metabolite biosynthesis; terpenoid biosynthesis. In terms of biological role, asnovolin J 5',6'-dehydrogenase; part of the gene cluster that mediates the biosynthesis of novofumigatonin, a heavily oxygenated meroterpenoid containing a unique orthoester moiety. The first step of the pathway is the synthesis of 3,5-dimethylorsellinic acid (DMOA) by the polyketide synthase nvfA via condensation of one acetyl-CoA starter unit with 3 malonyl-CoA units and 2 methylations. DMOA is then converted to farnesyl-DMOA by the farnesyltransferase nvfB. Epoxydation by FAD-dependent monooxygenase nvfK, followed by a protonation-initiated cyclization catalyzed by the terpene cyclase nvfL leads to the production of asnavolin H. The short chain dehydrogenase nvfC then as a 3-OH dehydrogenase of asnovolin H to yield chemesin D. There are two branches to synthesize asnovolin A from chemesin D. In one branch, chemesin D undergoes Baeyer-Villiger oxidation by nvfH, methylation by nvfJ, and enoyl reduction by the nvfM D enoylreductase that reduces the double bond between C-5'and C-6', to form respectively asnovolin I, asnovolin K, and asnovolin A. In the other branch, the methylation precedes the Baeyer-Villiger oxidation and the enoyl reduction to yield asnovolin A via the asnovolin J intermediate. Asnovolin A is further converted to fumigatonoid A by the Fe(II)/2-oxoglutarate-dependent dioxygenase nvfI that catalyzes an endoperoxidation reaction. The alpha/beta hydrolase nvfD then acts as an epimerase that converts fumigatonoid A to its C-5' epimer, which then undergoes spontaneous or nvfD-catalyzed lactonization. The following step utilizes the ketoreductase nvfG to produce fumigatonoid B. The dioxygenase nvfE further converts fumigatonoid B into fumigatonoid C. Finally the Fe(II)/2-oxoglutarate-dependent dioxygenase nvfF catalyzes two rounds of oxidation to transform fumigatonoid C into the end product, novofumigatonin A. This chain is Asnovolin J 5',6'-dehydrogenase nvfM, found in Aspergillus novofumigatus (strain IBT 16806).